We begin with the raw amino-acid sequence, 530 residues long: Autoinducer-2 kinase (530 aa).

It belongs to the FGGY kinase family.

The protein localises to the cytoplasm. The catalysed reaction is (S)-4,5-dihydroxypentane-2,3-dione + ATP = (2S)-2-hydroxy-3,4-dioxopentyl phosphate + ADP + H(+). Functionally, catalyzes the phosphorylation of autoinducer-2 (AI-2) to phospho-AI-2, which subsequently inactivates the transcriptional regulator LsrR and leads to the transcription of the lsr operon. Phosphorylates the ring-open form of (S)-4,5-dihydroxypentane-2,3-dione (DPD), which is the precursor to all AI-2 signaling molecules, at the C5 position. This chain is Autoinducer-2 kinase, found in Salmonella paratyphi A (strain ATCC 9150 / SARB42).